We begin with the raw amino-acid sequence, 555 residues long: uncharacterized protein (555 aa).

A signal peptide spans 1-28 (MRSGLFGVLRWTAVGLVATLVASLALTA). Cys-29 is lipidated: N-palmitoyl cysteine. Cys-29 is lipidated: S-diacylglycerol cysteine.

This sequence to M.tuberculosis Rv2585c and M.bovis Mb2616c.

The protein localises to the cell membrane. This is an uncharacterized protein from Mycobacterium leprae (strain TN).